The primary structure comprises 492 residues: Ribose import ATP-binding protein RbsA (492 aa).

ABC transporter domains are found at residues 3–239 and 249–492; these read IEMK…VGRS and AEIR…TGGK. ATP is bound at residue 35–42; it reads GENGAGKS.

Belongs to the ABC transporter superfamily. Ribose importer (TC 3.A.1.2.1) family. The complex is composed of an ATP-binding protein (RbsA), two transmembrane proteins (RbsC) and a solute-binding protein (RbsB).

It is found in the cell membrane. The enzyme catalyses D-ribose(out) + ATP + H2O = D-ribose(in) + ADP + phosphate + H(+). In terms of biological role, part of the ABC transporter complex RbsABC involved in ribose import. Responsible for energy coupling to the transport system. This Lactococcus lactis subsp. cremoris (strain SK11) protein is Ribose import ATP-binding protein RbsA.